A 92-amino-acid polypeptide reads, in one-letter code: Trp operon repressor homolog (92 aa).

A DNA-binding region spans residues 56 to 79 (QREVASKLGVSITKITRGAANLQD).

This sequence belongs to the TrpR family. In terms of assembly, homodimer.

It is found in the cytoplasm. Functionally, this protein is an aporepressor. When complexed with L-tryptophan it binds the operator region of the trp operon and prevents the initiation of transcription. In Xylella fastidiosa (strain M23), this protein is Trp operon repressor homolog.